Reading from the N-terminus, the 236-residue chain is MTAPWADWDHVLKIDPDKSLVDGETFDDIAQTGTDAIEIGGTLDVTTEKMRRVIDACRTHEVPLYQEPSNPAVVVEDEALDGYLVPVVLNAGDPFWITGAHKEWVRIADLDWERTTTEAYIVMNPDASVAEYTGADCGLDADEVGAYATVAERLLGQEVVYVEYSGTLGDPAVVEAAAGGVDDAAVFYGGGIDGYDAAYRMGAHADTIVVGDLVHEAGVDAVRETVSGVRDAQAEE.

K13 is a binding site for sn-glycerol 1-phosphate. The Mg(2+) site is built by D15 and T42. Residues 161–166, G191, and 211–212 contribute to the sn-glycerol 1-phosphate site; these read YVEYSG and GD.

It belongs to the GGGP/HepGP synthase family. Group I subfamily. Mg(2+) serves as cofactor.

It localises to the cytoplasm. It carries out the reaction sn-glycerol 1-phosphate + (2E,6E,10E)-geranylgeranyl diphosphate = sn-3-O-(geranylgeranyl)glycerol 1-phosphate + diphosphate. It functions in the pathway membrane lipid metabolism; glycerophospholipid metabolism. Functionally, prenyltransferase that catalyzes the transfer of the geranylgeranyl moiety of geranylgeranyl diphosphate (GGPP) to the C3 hydroxyl of sn-glycerol-1-phosphate (G1P). This reaction is the first ether-bond-formation step in the biosynthesis of archaeal membrane lipids. The polypeptide is Geranylgeranylglyceryl phosphate synthase (Halobacterium salinarum (strain ATCC 700922 / JCM 11081 / NRC-1) (Halobacterium halobium)).